We begin with the raw amino-acid sequence, 84 residues long: Beta-mammal toxin Cn2 (84 aa).

The N-terminal stretch at leucine 1–alanine 16 is a signal peptide. The LCN-type CS-alpha/beta domain maps to lysine 17–serine 82. 4 disulfides stabilise this stretch: cysteine 28–cysteine 81, cysteine 32–cysteine 57, cysteine 41–cysteine 62, and cysteine 45–cysteine 64. Serine 82 is subject to Serine amide.

Belongs to the long (4 C-C) scorpion toxin superfamily. Sodium channel inhibitor family. Beta subfamily. Expressed by the venom gland.

The protein localises to the secreted. In terms of biological role, mammal beta-toxins bind voltage-independently at site-4 of sodium channels (Nav) and shift the activation voltage to more negative potentials. This toxin is active against mammals. The polypeptide is Beta-mammal toxin Cn2 (Centruroides noxius (Mexican scorpion)).